The chain runs to 253 residues: Homeotic protein ultrabithorax (253 aa).

The segment covering 125 to 141 (GNTSNGSNAPNAANGQN) has biased composition (low complexity). Residues 125-193 (GNTSNGSNAP…GNGTAGGVPQ (69 aa)) form a disordered region. Residues 176-189 (RGGGSAGGGNGTAG) show a composition bias toward gly residues. An Antp-type hexapeptide motif is present at residues 237-242 (FYPWMA).

Belongs to the Antp homeobox family.

It is found in the nucleus. In terms of biological role, sequence-specific transcription factor which is part of a developmental regulatory system that provides cells with specific positional identities on the anterior-posterior axis. Binds the consensus region 5'-TTAAT[GT][GA]-3'. This homeotic protein controls development of the cells in the posterior thoracic and first abdominal segments. It activates the synthesis of the decapentaplegic (DPP) growth factor. This Drosophila funebris (Fruit fly) protein is Homeotic protein ultrabithorax (Ubx).